Consider the following 314-residue polypeptide: 4-hydroxy-3-methylbut-2-enyl diphosphate reductase (314 aa).

Cys-12 serves as a coordination point for [4Fe-4S] cluster. 2 residues coordinate (2E)-4-hydroxy-3-methylbut-2-enyl diphosphate: His-41 and His-74. Dimethylallyl diphosphate-binding residues include His-41 and His-74. Isopentenyl diphosphate contacts are provided by His-41 and His-74. Cys-96 contributes to the [4Fe-4S] cluster binding site. His-124 provides a ligand contact to (2E)-4-hydroxy-3-methylbut-2-enyl diphosphate. Residue His-124 participates in dimethylallyl diphosphate binding. His-124 is a binding site for isopentenyl diphosphate. Residue Glu-126 is the Proton donor of the active site. Thr-167 lines the (2E)-4-hydroxy-3-methylbut-2-enyl diphosphate pocket. Residue Cys-197 coordinates [4Fe-4S] cluster. (2E)-4-hydroxy-3-methylbut-2-enyl diphosphate-binding residues include Ser-225, Ser-226, Asn-227, and Ser-269. Ser-225, Ser-226, Asn-227, and Ser-269 together coordinate dimethylallyl diphosphate. Isopentenyl diphosphate contacts are provided by Ser-225, Ser-226, Asn-227, and Ser-269.

It belongs to the IspH family. [4Fe-4S] cluster serves as cofactor.

It carries out the reaction isopentenyl diphosphate + 2 oxidized [2Fe-2S]-[ferredoxin] + H2O = (2E)-4-hydroxy-3-methylbut-2-enyl diphosphate + 2 reduced [2Fe-2S]-[ferredoxin] + 2 H(+). The catalysed reaction is dimethylallyl diphosphate + 2 oxidized [2Fe-2S]-[ferredoxin] + H2O = (2E)-4-hydroxy-3-methylbut-2-enyl diphosphate + 2 reduced [2Fe-2S]-[ferredoxin] + 2 H(+). It functions in the pathway isoprenoid biosynthesis; dimethylallyl diphosphate biosynthesis; dimethylallyl diphosphate from (2E)-4-hydroxy-3-methylbutenyl diphosphate: step 1/1. It participates in isoprenoid biosynthesis; isopentenyl diphosphate biosynthesis via DXP pathway; isopentenyl diphosphate from 1-deoxy-D-xylulose 5-phosphate: step 6/6. Catalyzes the conversion of 1-hydroxy-2-methyl-2-(E)-butenyl 4-diphosphate (HMBPP) into a mixture of isopentenyl diphosphate (IPP) and dimethylallyl diphosphate (DMAPP). Acts in the terminal step of the DOXP/MEP pathway for isoprenoid precursor biosynthesis. This is 4-hydroxy-3-methylbut-2-enyl diphosphate reductase from Psychromonas ingrahamii (strain DSM 17664 / CCUG 51855 / 37).